The chain runs to 545 residues: Glucose-6-phosphate isomerase (545 aa).

The active-site Proton donor is the glutamate 351. Residues histidine 382 and lysine 510 contribute to the active site.

This sequence belongs to the GPI family.

Its subcellular location is the cytoplasm. The enzyme catalyses alpha-D-glucose 6-phosphate = beta-D-fructose 6-phosphate. Its pathway is carbohydrate biosynthesis; gluconeogenesis. It functions in the pathway carbohydrate degradation; glycolysis; D-glyceraldehyde 3-phosphate and glycerone phosphate from D-glucose: step 2/4. Functionally, catalyzes the reversible isomerization of glucose-6-phosphate to fructose-6-phosphate. The protein is Glucose-6-phosphate isomerase of Shewanella sp. (strain MR-4).